The sequence spans 283 residues: K88 fimbrial protein AC (283 aa).

A signal peptide spans 1–21 (MKKTLIALAIAASAASGMAHA).

This sequence belongs to the fimbrial K88 protein family. K88 fimbria, 0.1-1 micrometer in length and 7 nanometers in diameter, is composed of about 100 identical subunits.

It localises to the fimbrium. In terms of biological role, K88 major fimbrial subunit. Fimbriae (also called pili), are polar filaments radiating from the surface of the bacterium to a length of 0.5-1.5 micrometers and numbering 100-300 per cell. They enable bacteria to colonize the epithelium of specific host organs. The chain is K88 fimbrial protein AC (faeG) from Escherichia coli.